Reading from the N-terminus, the 171-residue chain is Adenine phosphoribosyltransferase (171 aa).

This sequence belongs to the purine/pyrimidine phosphoribosyltransferase family. As to quaternary structure, homodimer.

The protein resides in the cytoplasm. The enzyme catalyses AMP + diphosphate = 5-phospho-alpha-D-ribose 1-diphosphate + adenine. It participates in purine metabolism; AMP biosynthesis via salvage pathway; AMP from adenine: step 1/1. Its function is as follows. Catalyzes a salvage reaction resulting in the formation of AMP, that is energically less costly than de novo synthesis. This chain is Adenine phosphoribosyltransferase, found in Rhodospirillum centenum (strain ATCC 51521 / SW).